A 297-amino-acid polypeptide reads, in one-letter code: uncharacterized protein (297 aa).

The next 7 helical transmembrane spans lie at 14-34 (LFLM…FLKF), 55-75 (LLLG…IYFF), 81-101 (FYFG…AGAL), 110-130 (AIIL…RVAF), 135-155 (LSTL…KLLF), 163-183 (IVGA…YGSI), and 208-228 (LIMT…SKCF).

It localises to the cell membrane. This is an uncharacterized protein from Methanocaldococcus jannaschii (strain ATCC 43067 / DSM 2661 / JAL-1 / JCM 10045 / NBRC 100440) (Methanococcus jannaschii).